The sequence spans 517 residues: Nucleoside transporter FUN26 (517 aa).

Residues 1-63 (MSTSADTDTI…EREQSVSTEP (63 aa)) are disordered. The span at 25–44 (THSEEISRSGEEHESENNEH) shows a compositional bias: basic and acidic residues. Ser-45 and Ser-58 each carry phosphoserine. The next 11 helical transmembrane spans lie at 76–96 (LSYITFFAIGIGLLWPWNCIL), 116–136 (IFTSSMMSFSTISSMLFNIYL), 151–171 (LVWEIIVFTVMCFFTILHFLL), 174–194 (WFNFMFIMMLVVISSMGTAMT), 214–234 (MVGQAVAGVLPSLVLFALAFI), 243–263 (GGILLYFFTTTLVVTICVVMF), 344–364 (LVLSIFTTFVVTLVFPVFASA), 367–387 (VTGLPLSNAQYIPLIFTLWNL), 411–431 (TFIYSLLRVAAIPLFLMFTAI), 446–466 (IVDLCYMLLQFLFGVTNGHVI), and 492–512 (IFVSTGLALGSIISYVFVFII).

It belongs to the SLC29A/ENT transporter (TC 2.A.57) family.

The protein localises to the membrane. Its function is as follows. Has broad nucleoside selectivity (uridine, adenosine and cytidine) and most likely functions to transport nucleosides across intracellular membranes. The sequence is that of Nucleoside transporter FUN26 (FUN26) from Saccharomyces cerevisiae (strain ATCC 204508 / S288c) (Baker's yeast).